We begin with the raw amino-acid sequence, 476 residues long: RuvB-like helicase 2 (476 aa).

76 to 83 serves as a coordination point for ATP; it reads GPPSTGKT.

Belongs to the RuvB family. In terms of assembly, may form heterododecamers with RVB1. Component of the SWR1 chromatin remodeling complex, the INO80 chromatin remodeling complex, and of the R2TP complex.

It is found in the nucleus. It catalyses the reaction ATP + H2O = ADP + phosphate + H(+). Functionally, DNA helicase which participates in several chromatin remodeling complexes, including the SWR1 and the INO80 complexes. The SWR1 complex mediates the ATP-dependent exchange of histone H2A for the H2A variant HZT1 leading to transcriptional regulation of selected genes by chromatin remodeling. The INO80 complex remodels chromatin by shifting nucleosomes and is involved in DNA repair. Also involved in pre-rRNA processing. The chain is RuvB-like helicase 2 (RVB2) from Candida glabrata (strain ATCC 2001 / BCRC 20586 / JCM 3761 / NBRC 0622 / NRRL Y-65 / CBS 138) (Yeast).